Reading from the N-terminus, the 432-residue chain is Trigger factor (432 aa).

The PPIase FKBP-type domain maps to 161–246 (DDRVTIDFVG…LKKVENMVLP (86 aa)).

It belongs to the FKBP-type PPIase family. Tig subfamily.

Its subcellular location is the cytoplasm. The catalysed reaction is [protein]-peptidylproline (omega=180) = [protein]-peptidylproline (omega=0). Its function is as follows. Involved in protein export. Acts as a chaperone by maintaining the newly synthesized protein in an open conformation. Functions as a peptidyl-prolyl cis-trans isomerase. The protein is Trigger factor of Haemophilus influenzae (strain PittGG).